A 1062-amino-acid polypeptide reads, in one-letter code: Zinc finger protein swm (1062 aa).

Positions 7 to 75 (DKLKDWLSVV…ERLFDAIASE (69 aa)) constitute a PWI domain. 2 disordered regions span residues 119 to 145 (ADSPPPPPKDNVIKPDSNQVKLEQASQ) and 171 to 340 (KPAF…PDRV). Residues 134–145 (DSNQVKLEQASQ) show a composition bias toward polar residues. Residues 172–182 (PAFDHKTKDSH) are compositionally biased toward basic and acidic residues. Residues 197–207 (SASPPGRSSGV) are compositionally biased toward low complexity. Over residues 208–220 (SGSGGGGPGGAGL) the composition is skewed to gly residues. The segment covering 234-249 (SRRRRASLRSRSRSRS) has biased composition (basic residues). Composition is skewed to basic and acidic residues over residues 264-273 (RRVNEREKTQ) and 294-310 (RNFDRRRIGGNADDRPR). The segment covering 322-340 (RSMSPERNARRNQNSPDRV) has biased composition (polar residues). The C3H1-type zinc-finger motif lies at 363–391 (SHPRQRCRDFDEKGYCVRGETCPWDHGVN). Residues 416–463 (EIWARSGGPPPGAGQGPVPPPTQPGQTTINPFSGNVRPTTLMSGSGPS) are disordered. Positions 423–438 (GPPPGAGQGPVPPPTQ) are enriched in pro residues. Polar residues predominate over residues 444 to 461 (INPFSGNVRPTTLMSGSG). The RRM domain maps to 561 to 635 (SSLELRKVPR…RFIKVFWHND (75 aa)). 5 disordered regions span residues 666–704 (NVPAVPTPNADGAKISNANPLTEAGAGNIGTPATEQANT), 716–741 (TTTAGGSAGGAAGAGAPGSGRPLNPA), 822–847 (QDQLQAQMQQQQQQQQPPVKKTKEQQ), 886–920 (SAANNKSTHYAPASGAPGGGAGRKRPNLPEGPTRV), and 1004–1062 (APVE…SWRR). Residues 721-733 (GSAGGAAGAGAPG) show a composition bias toward gly residues. Residues 823-840 (DQLQAQMQQQQQQQQPPV) are compositionally biased toward low complexity. Polar residues predominate over residues 1018 to 1037 (SLENPKQLIQSVSESESLLG). Positions 1046-1056 (LEDEEEDEESE) are enriched in acidic residues.

The protein resides in the nucleus. Its function is as follows. Negatively regulates Hedgehog (hh) protein signal in wing development. Regulates neural-specific glycosylation by binding to FucTA mRNA and facilitating its nuclear export in neural cells. The protein is Zinc finger protein swm of Drosophila melanogaster (Fruit fly).